The sequence spans 418 residues: uncharacterized protein (418 aa).

An N-acetyltransferase domain is found at 7–158 (IDVRPIAEAE…TGLDPRWSGP (152 aa)). Acetyl-CoA-binding positions include 87–89 (VTV) and 95–100 (RRGLLT). The active-site Proton donor is the Tyr-128. Phe-418 functions as the Proton acceptor; via carboxylate in the catalytic mechanism.

The protein belongs to the acetyltransferase Eis family. As to quaternary structure, homohexamer; trimer of dimers.

This is an uncharacterized protein from Streptomyces avermitilis (strain ATCC 31267 / DSM 46492 / JCM 5070 / NBRC 14893 / NCIMB 12804 / NRRL 8165 / MA-4680).